The primary structure comprises 217 residues: Large ribosomal subunit protein bL25 (217 aa).

The tract at residues 178-217 is disordered; sequence VVAPTEEPTEEEIEAMEGEQQTEEPEVVGESKEDEEKTEE. Residues 184–205 are compositionally biased toward acidic residues; it reads EPTEEEIEAMEGEQQTEEPEVV. Over residues 206–217 the composition is skewed to basic and acidic residues; the sequence is GESKEDEEKTEE.

This sequence belongs to the bacterial ribosomal protein bL25 family. CTC subfamily. Part of the 50S ribosomal subunit; part of the 5S rRNA/L5/L18/L25 subcomplex. Contacts the 5S rRNA. Binds to the 5S rRNA independently of L5 and L18.

Functionally, this is one of the proteins that binds to the 5S RNA in the ribosome where it forms part of the central protuberance. This Staphylococcus aureus (strain MRSA252) protein is Large ribosomal subunit protein bL25.